A 121-amino-acid polypeptide reads, in one-letter code: ATP synthase epsilon chain (121 aa).

Belongs to the ATPase epsilon chain family. In terms of assembly, F-type ATPases have 2 components, CF(1) - the catalytic core - and CF(0) - the membrane proton channel. CF(1) has five subunits: alpha(3), beta(3), gamma(1), delta(1), epsilon(1). CF(0) has three main subunits: a, b and c.

It is found in the cell membrane. Produces ATP from ADP in the presence of a proton gradient across the membrane. The chain is ATP synthase epsilon chain from Mycobacterium leprae (strain Br4923).